A 264-amino-acid polypeptide reads, in one-letter code: uncharacterized protein (264 aa).

The N-terminal stretch at Met1–Ala22 is a signal peptide. A helical membrane pass occupies residues Leu227 to Tyr247.

Its subcellular location is the membrane. This is an uncharacterized protein from Bacillus subtilis (strain 168).